Consider the following 467-residue polypeptide: Uronate isomerase (467 aa).

It belongs to the metallo-dependent hydrolases superfamily. Uronate isomerase family.

It catalyses the reaction D-glucuronate = D-fructuronate. The catalysed reaction is aldehydo-D-galacturonate = keto-D-tagaturonate. The protein operates within carbohydrate metabolism; pentose and glucuronate interconversion. This chain is Uronate isomerase, found in Histophilus somni (strain 2336) (Haemophilus somnus).